Reading from the N-terminus, the 720-residue chain is Translation initiation factor IF-2 (720 aa).

The segment at 48-138 (KKFKASQAKD…NEVEETKEMP (91 aa)) is disordered. Low complexity-rich tracts occupy residues 60 to 75 (KQNT…NKQN) and 99 to 113 (KGKQ…NKNQ). Residues 114-123 (KNNKNKKNNK) are compositionally biased toward basic residues. The 170-residue stretch at 222–391 (ERPAVVTIMG…GLVAEVQELK (170 aa)) folds into the tr-type G domain. A G1 region spans residues 231–238 (GHVDHGKT). 231 to 238 (GHVDHGKT) is a binding site for GTP. The segment at 256 to 260 (GITQH) is G2. The segment at 277-280 (DTPG) is G3. Residues 277-281 (DTPGH) and 331-334 (NKID) contribute to the GTP site. Positions 331-334 (NKID) are G4. Positions 367-369 (SAL) are G5.

This sequence belongs to the TRAFAC class translation factor GTPase superfamily. Classic translation factor GTPase family. IF-2 subfamily.

The protein resides in the cytoplasm. One of the essential components for the initiation of protein synthesis. Protects formylmethionyl-tRNA from spontaneous hydrolysis and promotes its binding to the 30S ribosomal subunits. Also involved in the hydrolysis of GTP during the formation of the 70S ribosomal complex. The chain is Translation initiation factor IF-2 from Staphylococcus epidermidis (strain ATCC 35984 / DSM 28319 / BCRC 17069 / CCUG 31568 / BM 3577 / RP62A).